A 347-amino-acid chain; its full sequence is FK506-binding protein-like (347 aa).

A disordered region spans residues 1–24 (METSPISPMNEKNTAQPQQREENA). T3 carries the post-translational modification Phosphothreonine. 3 TPR repeats span residues 208 to 241 (AKEE…LLTL), 250 to 283 (TTLY…EPGH), and 284 to 317 (LKAL…DPKN).

In terms of assembly, forms a ternary complex with CDKN1A/p21 and HSP90AB1/Hsp90.

Functionally, may be involved in response to X-ray. Regulates p21 protein stability by binding to Hsp90 and p21. This is FK506-binding protein-like (Fkbpl) from Mus musculus (Mouse).